Here is a 472-residue protein sequence, read N- to C-terminus: ATP-dependent rRNA helicase rrp3 (472 aa).

The disordered stretch occupies residues 1 to 52; the sequence is MRDVKKRKIAHEAPEHGSDTESTSSHKSVAQQDDPLETQDEATATESRPAPK. A compositionally biased stretch (basic and acidic residues) spans 10–19; sequence AHEAPEHGSD. Residues 20-31 are compositionally biased toward polar residues; the sequence is TESTSSHKSVAQ. The Q motif motif lies at 52 to 80; sequence KSFKDLGIIDQLCEACETMGYKAPTPIQA. In terms of domain architecture, Helicase ATP-binding spans 83-254; sequence IPLALQGRDL…RASLSNPLRV (172 aa). An ATP-binding site is contributed by 96-103; sequence AETGSGKT. Residues 202–205 carry the DEAD box motif; the sequence is DEAD. Positions 282–426 constitute a Helicase C-terminal domain; the sequence is YLVYLLNEFV…EYELEKDEVM (145 aa). Positions 444–472 are disordered; it reads KNFDEKRGTKAKKFGKGKRSRDEMDQEEG. Positions 452–462 are enriched in basic residues; it reads TKAKKFGKGKR.

The protein belongs to the DEAD box helicase family. DDX47/RRP3 subfamily. As to quaternary structure, interacts with the SSU processome.

It is found in the nucleus. It carries out the reaction ATP + H2O = ADP + phosphate + H(+). ATP-dependent rRNA helicase required for pre-ribosomal RNA processing. Involved in the maturation of the 35S-pre-rRNA and to its cleavage to mature 18S rRNA. In Aspergillus fumigatus (strain ATCC MYA-4609 / CBS 101355 / FGSC A1100 / Af293) (Neosartorya fumigata), this protein is ATP-dependent rRNA helicase rrp3.